We begin with the raw amino-acid sequence, 187 residues long: MSRIGKLPIKLPTTVEISHQSDATVQVINVKGKFGSLQRTLPEELKIEQIHNDNGSSLIVSFENQTRTNKSLQGLYRTLINNMVIGVTEQFVIILTLQGVGYRASVQGKSLVLNLGYSHPVEIDIPEGITVEVTQNTTLNIKACDKEQLGLFAAKVRAWRPPEPYKGKGILYKNEQILRKAGKSGKK.

It belongs to the universal ribosomal protein uL6 family. As to quaternary structure, part of the 50S ribosomal subunit.

Its subcellular location is the plastid. It localises to the chloroplast. Its function is as follows. Binds 23S rRNA. This chain is Large ribosomal subunit protein uL6c (rpl6), found in Thalassiosira pseudonana (Marine diatom).